Consider the following 368-residue polypeptide: MNERIFRENTRPVQVGNLTIGGSEELTIQSMTTTKTHDVEATVAEIHRLEEAGCQIVRVACPDERAANALSAIKKKIHIPLVADIHFDYRLALKAIDAGVDKIRINPGNIGRRDRVEKVVNAAKAKNIPIRIGVNAGSLEKKIIQKYGYPTADGMVESALAHIKILEDLDFYDIIVSLKASDVNLAIEAYDKASRAFNYPLHLGITESGTQFAGGIKSAAGLGAILSLGIGNTLRVSLSADPVEEIKVAREVLKSFGLSSNAAMLISCPTCGRIEIDLIRIANEVENYIAKIEVPIKVAVLGCAVNGPGEAREADIGIAGSNGEGLLFRHGKIIRKVPEAIMIDELKKEIDILAEEFFVKKIDLESLR.

[4Fe-4S] cluster is bound by residues C268, C271, C303, and E310.

Belongs to the IspG family. Requires [4Fe-4S] cluster as cofactor.

The enzyme catalyses (2E)-4-hydroxy-3-methylbut-2-enyl diphosphate + oxidized [flavodoxin] + H2O + 2 H(+) = 2-C-methyl-D-erythritol 2,4-cyclic diphosphate + reduced [flavodoxin]. Its pathway is isoprenoid biosynthesis; isopentenyl diphosphate biosynthesis via DXP pathway; isopentenyl diphosphate from 1-deoxy-D-xylulose 5-phosphate: step 5/6. Functionally, converts 2C-methyl-D-erythritol 2,4-cyclodiphosphate (ME-2,4cPP) into 1-hydroxy-2-methyl-2-(E)-butenyl 4-diphosphate. In Listeria monocytogenes serovar 1/2a (strain ATCC BAA-679 / EGD-e), this protein is 4-hydroxy-3-methylbut-2-en-1-yl diphosphate synthase (flavodoxin).